A 974-amino-acid polypeptide reads, in one-letter code: Apical junction component 1 homolog (974 aa).

3 disordered regions span residues 23–137 (PGLT…PSYP), 201–233 (ARSS…PRHV), and 306–326 (CSRP…GGSY). At S52 the chain carries Phosphoserine. The segment covering 69 to 79 (EPPPPEPAPPR) has biased composition (pro residues). The segment covering 116–134 (RGREAQRAVRVEGSPRREP) has biased composition (basic and acidic residues). At S129 the chain carries Phosphoserine. A compositionally biased stretch (polar residues) spans 201 to 216 (ARSSRSCAPRETTSWA). R322 is modified (omega-N-methylarginine). Phosphoserine is present on residues S468, S509, and S512. The tract at residues 539-576 (DLRSVDRPTAKGWELPGGRPRQPVSTVPEGPASSRQRS) is disordered. S593 is subject to Phosphoserine. Residues 618 to 661 (AGPGGATLLAPSRSPPASAGSTEEPTGSGEAADASPEPSADEDD) are disordered. The span at 623 to 636 (ATLLAPSRSPPASA) shows a compositional bias: low complexity. At R749 the chain carries Asymmetric dimethylarginine; alternate. Omega-N-methylarginine; alternate is present on R749.

The protein resides in the apical cell membrane. It localises to the cell projection. The protein localises to the cilium. Its subcellular location is the cell junction. It is found in the adherens junction. Its function is as follows. May be involved in the control of adherens junction integrity. This chain is Apical junction component 1 homolog (Ajm1), found in Mus musculus (Mouse).